The primary structure comprises 338 residues: Cytoskeleton protein RodZ (338 aa).

At 1–111 (MNTEATHEEN…LGKSRKKRDG (111 aa)) the chain is on the cytoplasmic side. An HTH cro/C1-type domain is found at 19-71 (LRLAREQLGLSQQVVAERLCLKVSTVRDIEEDKAPADLASTFLRGYIRSYARL). The H-T-H motif DNA-binding region spans 30-49 (QQVVAERLCLKVSTVRDIEE). The helical; Signal-anchor for type II membrane protein transmembrane segment at 112–132 (WLMSFTWLVLFVVVGLTGAWW) threads the bilayer. At 133–338 (WQNHKAQQEE…TLNAEQSVTQ (206 aa)) the chain is on the periplasmic side. 2 stretches are compositionally biased toward polar residues: residues 147–180 (ADQS…QDQA) and 189–214 (GDTQ…SQQP). A disordered region spans residues 147 to 245 (ADQSSAELSQ…AQSQLPVGQA (99 aa)). A compositionally biased stretch (low complexity) spans 220–239 (SQANTDTAAQQNTTQPAQSQ).

This sequence belongs to the RodZ family.

The protein localises to the cell inner membrane. Cytoskeletal protein that is involved in cell-shape control through regulation of the length of the long axis. The sequence is that of Cytoskeleton protein RodZ from Cronobacter sakazakii (strain ATCC BAA-894) (Enterobacter sakazakii).